Consider the following 141-residue polypeptide: Large ribosomal subunit protein uL11 (141 aa).

It belongs to the universal ribosomal protein uL11 family. In terms of assembly, part of the ribosomal stalk of the 50S ribosomal subunit. Interacts with L10 and the large rRNA to form the base of the stalk. L10 forms an elongated spine to which L12 dimers bind in a sequential fashion forming a multimeric L10(L12)X complex. Post-translationally, one or more lysine residues are methylated.

Forms part of the ribosomal stalk which helps the ribosome interact with GTP-bound translation factors. The polypeptide is Large ribosomal subunit protein uL11 (Chloroherpeton thalassium (strain ATCC 35110 / GB-78)).